We begin with the raw amino-acid sequence, 506 residues long: Cobyric acid synthase (506 aa).

In terms of domain architecture, GATase cobBQ-type spans 260–453 (KVGVAAIYFP…FHGIFNEPAV (194 aa)). The active-site Nucleophile is cysteine 341. Histidine 445 is an active-site residue.

It belongs to the CobB/CobQ family. CobQ subfamily.

Its pathway is cofactor biosynthesis; adenosylcobalamin biosynthesis. In terms of biological role, catalyzes amidations at positions B, D, E, and G on adenosylcobyrinic A,C-diamide. NH(2) groups are provided by glutamine, and one molecule of ATP is hydrogenolyzed for each amidation. This chain is Cobyric acid synthase, found in Chlorobium chlorochromatii (strain CaD3).